A 406-amino-acid chain; its full sequence is 1-deoxy-D-xylulose 5-phosphate reductoisomerase (406 aa).

Positions 21, 22, 23, 24, 47, 50, and 127 each coordinate NADPH. Lys128 contacts 1-deoxy-D-xylulose 5-phosphate. Glu129 provides a ligand contact to NADPH. Position 151 (Asp151) interacts with Mn(2+). Positions 152, 153, 177, and 200 each coordinate 1-deoxy-D-xylulose 5-phosphate. Glu153 provides a ligand contact to Mn(2+). Gly206 serves as a coordination point for NADPH. Residues Ser213, Asn218, Lys219, and Glu222 each coordinate 1-deoxy-D-xylulose 5-phosphate. Position 222 (Glu222) interacts with Mn(2+).

It belongs to the DXR family. Mg(2+) serves as cofactor. Mn(2+) is required as a cofactor.

The catalysed reaction is 2-C-methyl-D-erythritol 4-phosphate + NADP(+) = 1-deoxy-D-xylulose 5-phosphate + NADPH + H(+). It functions in the pathway isoprenoid biosynthesis; isopentenyl diphosphate biosynthesis via DXP pathway; isopentenyl diphosphate from 1-deoxy-D-xylulose 5-phosphate: step 1/6. Functionally, catalyzes the NADPH-dependent rearrangement and reduction of 1-deoxy-D-xylulose-5-phosphate (DXP) to 2-C-methyl-D-erythritol 4-phosphate (MEP). This is 1-deoxy-D-xylulose 5-phosphate reductoisomerase from Mycobacterium leprae (strain Br4923).